The sequence spans 172 residues: RNA silencing suppressor p19 (172 aa).

The span at 1-15 shows a compositional bias: basic and acidic residues; sequence MERAIQGNDAREQAY. The interval 1–37 is disordered; sequence MERAIQGNDAREQAYGERWNGGSGSSTSPFKLPDESP.

The protein belongs to the tombusvirus protein p19 family. Homodimer.

Viral suppressor of RNA silencing which binds specifically to silencing RNAs (siRNAs). Acts as a molecular caliper to specifically select siRNAs based on the length of the duplex region of the RNA. The protein is RNA silencing suppressor p19 of Capsicum annuum (Capsicum pepper).